We begin with the raw amino-acid sequence, 292 residues long: N-acetylneuraminate lyase (292 aa).

The aceneuramate site is built by S46 and T47. Catalysis depends on Y135, which acts as the Proton donor. Residue K163 is the Schiff-base intermediate with substrate of the active site. The aceneuramate site is built by T165, G187, D189, E190, and S206.

It belongs to the DapA family. NanA subfamily. In terms of assembly, homotetramer.

It is found in the cytoplasm. It catalyses the reaction aceneuramate = aldehydo-N-acetyl-D-mannosamine + pyruvate. The protein operates within amino-sugar metabolism; N-acetylneuraminate degradation; D-fructose 6-phosphate from N-acetylneuraminate: step 1/5. Functionally, catalyzes the reversible aldol cleavage of N-acetylneuraminic acid (sialic acid; Neu5Ac) to form pyruvate and N-acetylmannosamine (ManNAc) via a Schiff base intermediate. In Lactiplantibacillus plantarum (strain ATCC BAA-793 / NCIMB 8826 / WCFS1) (Lactobacillus plantarum), this protein is N-acetylneuraminate lyase.